The following is a 424-amino-acid chain: ATP-sensitive inward rectifier potassium channel 8 (424 aa).

Topologically, residues Met1–Trp69 are cytoplasmic. Ser6 is subject to Phosphoserine. Residues Arg70–Val94 traverse the membrane as a helical segment. The Extracellular portion of the chain corresponds to Ala95–Ser126. An intramembrane region (helical; Pore-forming) is located at residues Phe127–Gln138. The pore-forming intramembrane region spans Val139–Gly145. The short motif at Thr140 to Gly145 is the Selectivity filter element. The Extracellular portion of the chain corresponds to Arg146 to Leu154. A helical membrane pass occupies residues Ala155 to Cys176. Over Ile177–Ser424 the chain is Cytoplasmic. The segment at Glu373 to Lys409 is disordered. A compositionally biased stretch (low complexity) spans Arg387–Ser404.

Belongs to the inward rectifier-type potassium channel (TC 1.A.2.1) family. KCNJ8 subfamily. Interacts with ABCC9.

Its subcellular location is the membrane. It carries out the reaction K(+)(in) = K(+)(out). Functionally, inward rectifier potassium channels are characterized by a greater tendency to allow potassium to flow into the cell rather than out of it. Their voltage dependence is regulated by the concentration of extracellular potassium; as external potassium is raised, the voltage range of the channel opening shifts to more positive voltages. The inward rectification is mainly due to the blockage of outward current by internal magnesium. This channel is activated by internal ATP and can be blocked by external barium. Can form a sulfonylurea-sensitive but ATP-insensitive potassium channel with ABCC9. The protein is ATP-sensitive inward rectifier potassium channel 8 (Kcnj8) of Mus musculus (Mouse).